An 89-amino-acid chain; its full sequence is Small ribosomal subunit protein uS17 (89 aa).

The protein belongs to the universal ribosomal protein uS17 family. Part of the 30S ribosomal subunit.

In terms of biological role, one of the primary rRNA binding proteins, it binds specifically to the 5'-end of 16S ribosomal RNA. This is Small ribosomal subunit protein uS17 from Polynucleobacter asymbioticus (strain DSM 18221 / CIP 109841 / QLW-P1DMWA-1) (Polynucleobacter necessarius subsp. asymbioticus).